Here is a 248-residue protein sequence, read N- to C-terminus: 3-deoxy-manno-octulosonate cytidylyltransferase (248 aa).

It belongs to the KdsB family.

The protein localises to the cytoplasm. The enzyme catalyses 3-deoxy-alpha-D-manno-oct-2-ulosonate + CTP = CMP-3-deoxy-beta-D-manno-octulosonate + diphosphate. Its pathway is nucleotide-sugar biosynthesis; CMP-3-deoxy-D-manno-octulosonate biosynthesis; CMP-3-deoxy-D-manno-octulosonate from 3-deoxy-D-manno-octulosonate and CTP: step 1/1. It participates in bacterial outer membrane biogenesis; lipopolysaccharide biosynthesis. Functionally, activates KDO (a required 8-carbon sugar) for incorporation into bacterial lipopolysaccharide in Gram-negative bacteria. This is 3-deoxy-manno-octulosonate cytidylyltransferase from Syntrophus aciditrophicus (strain SB).